A 448-amino-acid polypeptide reads, in one-letter code: Vitamin D3 receptor (448 aa).

The nuclear receptor DNA-binding region spans Pro41 to Thr116. Zn(2+) contacts are provided by Cys44, Cys47, Cys61, Cys64, Cys80, Cys86, Cys96, and Cys99. 2 NR C4-type zinc fingers span residues Cys44–Cys64 and Cys80–Cys104. Residues Asp117–Glu146 are hinge. The NR LBD domain occupies Glu147 to Gly444. Ser258 lines the calcitriol pocket. Residues Lys267–Lys285 form an interaction with coactivator LXXLL motif region. Calcitriol contacts are provided by Arg295, Ser299, His326, and His418. Residues Pro437–Asn445 carry the 9aaTAD motif.

It belongs to the nuclear hormone receptor family. NR1 subfamily. In terms of assembly, homodimer in the absence of bound vitamin D3. Heterodimer with RXRA after vitamin D3 binding.

The protein resides in the nucleus. The protein localises to the cytoplasm. Functionally, nuclear receptor for calcitriol, the active form of vitamin D3 which mediates the action of this vitamin on cells. Enters the nucleus upon vitamin D3 binding where it forms heterodimers with the retinoid X receptor/RXR. The VDR-RXR heterodimers bind to specific response elements on DNA and activate the transcription of vitamin D3-responsive target genes. Plays a central role in calcium homeostasis. Also functions as a receptor for the secondary bile acid lithocholic acid (LCA) and its metabolites. This chain is Vitamin D3 receptor (VDR), found in Coturnix japonica (Japanese quail).